The chain runs to 557 residues: Nucleolin 1 (557 aa).

3 disordered regions span residues M1–K297, G376–G398, and L474–E557. Residues Q49–S63 show a composition bias toward basic and acidic residues. Composition is skewed to acidic residues over residues S64–E74, E91–E101, and S124–V135. The span at A174–S184 shows a compositional bias: low complexity. Residues S186 to D197 show a composition bias toward acidic residues. The span at K203–D217 shows a compositional bias: low complexity. Positions S218–D229 are enriched in acidic residues. The segment covering E230–S247 has biased composition (basic and acidic residues). Over residues E249–E263 the composition is skewed to acidic residues. Positions T264 to S281 are enriched in basic and acidic residues. The RRM 1 domain maps to K297–E374. The 81-residue stretch at K401 to P481 folds into the RRM 2 domain. Residues S485 to G503 are compositionally biased toward gly residues.

Interacts with THAL in the nucleus. Expressed in roots, leaves, shoots and flowers.

The protein localises to the nucleus. Its subcellular location is the nucleolus. In terms of biological role, involved in pre-rRNA processing and ribosome assembly. Is associated with intranucleolar chromatin and pre-ribosomal particles and plays a role in controlling activation and repression of a specific subset of rRNA genes located in distinctive nucleolar organizer regions. Binds specifically rDNA chromatin and may be required to maintain rDNA chromatin structure, but is probably not required for the overall histone methylation status of 45S rRNA genes. Involved in leaf polarity establishment by functioning cooperatively with AS1 to repress abaxial genes ARF3, ARF4, KAN1, KAN2, YAB1 and YAB5, and the knox homeobox genes KNAT1, KNAT2, KNAT6, and STM to promote adaxial development in leaf primordia at shoot apical meristems at high temperatures. In Arabidopsis thaliana (Mouse-ear cress), this protein is Nucleolin 1.